The sequence spans 169 residues: Sorting nexin-24 (169 aa).

An N-acetylmethionine modification is found at Met-1. One can recognise a PX domain in the interval 1-125; that stretch reads MEVYIPSFRY…SFDETESEES (125 aa). Residues Arg-38, Ser-40, Lys-61, and Arg-74 each coordinate a 1,2-diacyl-sn-glycero-3-phospho-(1D-myo-inositol-3-phosphate). Ser-113 and Ser-116 each carry phosphoserine.

The protein belongs to the sorting nexin family.

The protein resides in the cytoplasmic vesicle membrane. Functionally, may be involved in several stages of intracellular trafficking. The polypeptide is Sorting nexin-24 (SNX24) (Homo sapiens (Human)).